A 552-amino-acid chain; its full sequence is Phosphoglucomutase (552 aa).

Catalysis depends on Ser-143, which acts as the Phosphoserine intermediate. The Mg(2+) site is built by Ser-143, Asp-295, Asp-297, and Asp-299.

It belongs to the phosphohexose mutase family. Mg(2+) serves as cofactor.

It carries out the reaction alpha-D-glucose 1-phosphate = alpha-D-glucose 6-phosphate. It participates in glycolipid metabolism; diglucosyl-diacylglycerol biosynthesis. In terms of biological role, catalyzes the interconversion between glucose-6-phosphate and alpha-glucose-1-phosphate. This is the first step in the biosynthesis of diglucosyl-diacylglycerol (Glc2-DAG), i.e. the predominant glycolipid found in the S.aureus membrane, which is also used as a membrane anchor for lipoteichoic acid (LTA). The polypeptide is Phosphoglucomutase (pgcA) (Staphylococcus aureus (strain MSSA476)).